The chain runs to 821 residues: Calpain-3 (821 aa).

The disordered stretch occupies residues 1-34 (MPTVISASMAPRTGASQVPRTMPQAAQGKGTEAG). Positions 73 to 417 (LYLDPEFPPD…FTKLEICNLT (345 aa)) constitute a Calpain catalytic domain. Catalysis depends on residues C128, H334, and N358. The domain III stretch occupies residues 418–586 (ADALESDKLQ…KRNLSEEVEN (169 aa)). The linker stretch occupies residues 587–649 (TISVDRPVRK…EPSNTDQESE (63 aa)). The interval 603 to 652 (IFVSDRANSNKELGVDQESEEGQDKTSPDKQEKSPKPEPSNTDQESEEQQ) is disordered. Positions 624–638 (GQDKTSPDKQEKSPK) are enriched in basic and acidic residues. The span at 641-652 (PSNTDQESEEQQ) shows a compositional bias: polar residues. EF-hand domains lie at 649-683 (EEQQ…VVNK), 692-725 (FTLE…KKIK), 722-757 (KKIK…AGFH), and 787-821 (VRLE…TMYA). Residues 650-821 (EQQQFRNIFR…LEWLQLTMYA (172 aa)) form a domain IV region. Ca(2+) contacts are provided by A662, D665, E667, E672, D705, D707, S709, R711, E716, D735, D737, S739, T741, E746, D800, D802, D804, and I806.

This sequence belongs to the peptidase C2 family. In terms of assembly, homodimer; via EF-hand domain 4. Interacts with TTN/titin. Interacts with CMYA5; this interaction, which results in CMYA5 proteolysis, may protect CAPN3 from autolysis. Interacts with SIMC1. Interacts with UTP25; the interaction is required for CAPN3 translocation to the nucleolus. As to expression, skeletal muscle.

Its subcellular location is the cytoplasm. The protein localises to the nucleus. The protein resides in the nucleolus. It carries out the reaction Broad endopeptidase activity.. Its activity is regulated as follows. Activated by micromolar concentrations of calcium and inhibited by calpastatin. Calcium-regulated non-lysosomal thiol-protease. Proteolytically cleaves CTBP1. Mediates, with UTP25, the proteasome-independent degradation of p53/TP53. The chain is Calpain-3 (CAPN3) from Sus scrofa (Pig).